Reading from the N-terminus, the 153-residue chain is Satratoxin biosynthesis SC2 cluster transcription factor SAT15 (153 aa).

It localises to the nucleus. In terms of biological role, transcriptional regulator that may regulate the expression of the satratoxin biosynthesis SC2 cluster, one of the 3 clusters involved in the biosynthesis of satratoxins, trichothecene mycotoxins that are associated with human food poisonings. The polypeptide is Satratoxin biosynthesis SC2 cluster transcription factor SAT15 (Stachybotrys chartarum (strain CBS 109288 / IBT 7711) (Toxic black mold)).